Here is a 195-residue protein sequence, read N- to C-terminus: Transmembrane protein 239 (195 aa).

The next 2 helical transmembrane spans lie at 105 to 125 (LWGL…HALF) and 145 to 171 (HLLP…LLLF).

The protein localises to the membrane. The protein is Transmembrane protein 239 (TMEM239) of Homo sapiens (Human).